The chain runs to 212 residues: Probable GTP-binding protein EngB (212 aa).

The EngB-type G domain occupies 23–197 (TGIEVAFAGR…ERILDGWFGL (175 aa)). Residues 31-38 (GRSNAGKS), 58-62 (GRTQL), 76-79 (DLPG), 143-146 (TKAD), and 176-178 (FSS) each bind GTP. Mg(2+) is bound by residues Ser38 and Thr60.

The protein belongs to the TRAFAC class TrmE-Era-EngA-EngB-Septin-like GTPase superfamily. EngB GTPase family. The cofactor is Mg(2+).

Necessary for normal cell division and for the maintenance of normal septation. The polypeptide is Probable GTP-binding protein EngB (Alteromonas mediterranea (strain DSM 17117 / CIP 110805 / LMG 28347 / Deep ecotype)).